Reading from the N-terminus, the 322-residue chain is NADH-quinone oxidoreductase subunit H (322 aa).

8 helical membrane-spanning segments follow: residues 12–32, 79–99, 111–131, 151–171, 183–203, 234–254, 262–282, and 301–321; these read IGKA…MSFI, IFVL…AVVP, VGLL…LFAG, LSYE…TGSF, LWNV…GVAV, FFVG…TLFF, LPPF…FILL, and VCLP…LMNA.

It belongs to the complex I subunit 1 family. As to quaternary structure, NDH-1 is composed of 14 different subunits. Subunits NuoA, H, J, K, L, M, N constitute the membrane sector of the complex.

The protein resides in the cell inner membrane. It carries out the reaction a quinone + NADH + 5 H(+)(in) = a quinol + NAD(+) + 4 H(+)(out). NDH-1 shuttles electrons from NADH, via FMN and iron-sulfur (Fe-S) centers, to quinones in the respiratory chain. The immediate electron acceptor for the enzyme in this species is believed to be ubiquinone. Couples the redox reaction to proton translocation (for every two electrons transferred, four hydrogen ions are translocated across the cytoplasmic membrane), and thus conserves the redox energy in a proton gradient. This subunit may bind ubiquinone. The polypeptide is NADH-quinone oxidoreductase subunit H (Aeromonas hydrophila subsp. hydrophila (strain ATCC 7966 / DSM 30187 / BCRC 13018 / CCUG 14551 / JCM 1027 / KCTC 2358 / NCIMB 9240 / NCTC 8049)).